Here is a 508-residue protein sequence, read N- to C-terminus: MGLPWYRVHTVVLNDPGRLLSVHIMHTALVAGWAGSMALYELAVFDPSDPVLDPMWRQGMFVIPFMTRLGITNSWGGWNITGGTITNPGIWSYEGVAGAHIVFSGLCFLAAIWHWVYWDLEIFCDERTGKPSLDLPKIFGIHLFLAGVACFGFGAFHVTGLYGPGIWVSDPYGLTGRIQSVNPAWGVEGFDPFVPGGVASHHIAAGTLGILAGLFHLSVRPPQRLYKGLRMGNIETVLSSSIAAVFFAAFVVAGTMWYGSATTPIELFGPTRYQWDQGYFQQEIYRRVGAGLAENQSLSEAWSKIPEKLAFYDYIGNNPAKGGLFRAGSMDNGDGIAVGWLGHPVFRDKEGHELFVRRMPTFFETFPVVLVDGDGIVRADVPFRRAESKYSVEQVGVIVEFYGGELNGVSYSDPATVKKYARRAQLGEIFELDRATLKSDGVFRSSPRGWFTFGHASFALLFFFGHIWHGARTLFRDVFAGIDPDLDAQVEFGAFQKLGDPTTKKQVV.

6 helical membrane-spanning segments follow: residues 21-36 (SVHI…WAGS), 101-115 (IVFS…IWHW), 140-156 (GIHL…FGAF), 203-218 (IAAG…FHLS), 237-252 (VLSS…AFVV), and 457-472 (SFAL…HGAR).

The protein belongs to the PsbB/PsbC family. PsbB subfamily. In terms of assembly, PSII is composed of 1 copy each of membrane proteins PsbA, PsbB, PsbC, PsbD, PsbE, PsbF, PsbH, PsbI, PsbJ, PsbK, PsbL, PsbM, PsbT, PsbX, PsbY, PsbZ, Psb30/Ycf12, at least 3 peripheral proteins of the oxygen-evolving complex and a large number of cofactors. It forms dimeric complexes. The cofactor is Binds multiple chlorophylls. PSII binds additional chlorophylls, carotenoids and specific lipids..

It localises to the plastid. It is found in the chloroplast thylakoid membrane. One of the components of the core complex of photosystem II (PSII). It binds chlorophyll and helps catalyze the primary light-induced photochemical processes of PSII. PSII is a light-driven water:plastoquinone oxidoreductase, using light energy to abstract electrons from H(2)O, generating O(2) and a proton gradient subsequently used for ATP formation. In Glycine max (Soybean), this protein is Photosystem II CP47 reaction center protein.